Reading from the N-terminus, the 704-residue chain is Elongation factor G (704 aa).

Residues Asn10 to Leu290 enclose the tr-type G domain. Residues Ala19 to Thr26, Asp83 to His87, and Asn137 to Asp140 contribute to the GTP site.

It belongs to the TRAFAC class translation factor GTPase superfamily. Classic translation factor GTPase family. EF-G/EF-2 subfamily.

The protein localises to the cytoplasm. In terms of biological role, catalyzes the GTP-dependent ribosomal translocation step during translation elongation. During this step, the ribosome changes from the pre-translocational (PRE) to the post-translocational (POST) state as the newly formed A-site-bound peptidyl-tRNA and P-site-bound deacylated tRNA move to the P and E sites, respectively. Catalyzes the coordinated movement of the two tRNA molecules, the mRNA and conformational changes in the ribosome. This is Elongation factor G from Clavibacter michiganensis subsp. michiganensis (strain NCPPB 382).